Reading from the N-terminus, the 368-residue chain is 3-dehydroquinate synthase (368 aa).

NAD(+) contacts are provided by residues 131-132, lysine 144, and lysine 153; that span reads TT. Zn(2+) is bound by residues glutamate 186, histidine 249, and histidine 267.

It belongs to the sugar phosphate cyclases superfamily. Dehydroquinate synthase family. It depends on Co(2+) as a cofactor. Zn(2+) is required as a cofactor. The cofactor is NAD(+).

The protein localises to the cytoplasm. It carries out the reaction 7-phospho-2-dehydro-3-deoxy-D-arabino-heptonate = 3-dehydroquinate + phosphate. Its pathway is metabolic intermediate biosynthesis; chorismate biosynthesis; chorismate from D-erythrose 4-phosphate and phosphoenolpyruvate: step 2/7. In terms of biological role, catalyzes the conversion of 3-deoxy-D-arabino-heptulosonate 7-phosphate (DAHP) to dehydroquinate (DHQ). The polypeptide is 3-dehydroquinate synthase (Pelagibacter ubique (strain HTCC1062)).